The following is a 170-amino-acid chain: Transmembrane protein 217B (170 aa).

Positions 1-21 (MNVRMFSLMVGIFSVLNTTQF) are cleaved as a signal peptide. Topologically, residues 22–58 (FIFDLNQKTHICYEAKFSIYVDSKSELVTWTLFHRAN) are lumenal. A helical membrane pass occupies residues 59-79 (ISTGLSLTTIIIGCFLFYCIH). The Cytoplasmic segment spans residues 80–85 (KNIYMG). Residues 86 to 106 (LLIYAMWIITYELINFSIVLL) traverse the membrane as a helical segment. Residues 107 to 120 (LNGIIKDHFKTLSY) lie on the Lumenal side of the membrane. Residues 121 to 141 (LHWIFQISHMLLHFFCLPFIV) traverse the membrane as a helical segment. The Cytoplasmic portion of the chain corresponds to 142–170 (KHAYNLYKESQTVGRKRRHRLCSTIAVNS).

Its subcellular location is the membrane. This chain is Transmembrane protein 217B, found in Homo sapiens (Human).